Reading from the N-terminus, the 173-residue chain is Signal peptidase complex catalytic subunit SEC11 (173 aa).

Over 1–15 the chain is Cytoplasmic; the sequence is MLGVSGMQPRQLAAQ. The helical; Signal-anchor for type II membrane protein transmembrane segment at 16-36 threads the bilayer; it reads ILNFALVLSTAFMMWKGLSVV. Over 37–173 the chain is Lumenal; sequence SDSSSPIVVV…MGVMVVLQRE (137 aa). Residues Ser-50, His-89, and Asp-115 each act as charge relay system in the active site. The C-terminal short (CTS) helix stretch occupies residues 159 to 170; it reads VMLGLMGVMVVL.

Belongs to the peptidase S26B family. In terms of assembly, component of the signal peptidase complex (SPC) composed of a catalytic subunit SEC11 and three accessory subunits SPC1, SPC2 and SPC3. The complex induces a local thinning of the ER membrane which is used to measure the length of the signal peptide (SP) h-region of protein substrates. This ensures the selectivity of the complex towards h-regions shorter than 18-20 amino acids. SPC associates with the translocon complex.

Its subcellular location is the endoplasmic reticulum membrane. It catalyses the reaction Cleavage of hydrophobic, N-terminal signal or leader sequences from secreted and periplasmic proteins.. Functionally, catalytic component of the signal peptidase complex (SPC) which catalyzes the cleavage of N-terminal signal sequences from nascent proteins as they are translocated into the lumen of the endoplasmic reticulum. Specifically cleaves N-terminal signal peptides that contain a hydrophobic alpha-helix (h-region) shorter than 18-20 amino acids. The protein is Signal peptidase complex catalytic subunit SEC11 (SEC11) of Leptosphaeria maculans (strain JN3 / isolate v23.1.3 / race Av1-4-5-6-7-8) (Blackleg fungus).